A 339-amino-acid polypeptide reads, in one-letter code: Probable cytosolic iron-sulfur protein assembly protein CIAO1 (339 aa).

WD repeat units follow at residues 14 to 53, 59 to 98, 103 to 142, 148 to 187, 192 to 231, 250 to 289, and 301 to 339; these read HPDSRCWFLAWNPAGTLLASCGGDRRIRIWGTEGDSWICK, GHQRTVRKVAWSPCGNYLASASFDATTCIWKKNQDDFECV, GHENEVKSVAWAPSGNLLATCSRDKSVWVWEVDEEDEYEC, SHTQDVKHVVWHPSQELLASASYDDTVKLYREEEDDWVCC, GHESTVWSLAFDPSGQRLASCSDDRTVRIWRQYLPGNEQG, FHSRTIYDIAWCQLTGALATACGDDAIRVFQEDPNSDPQQ, and AHSQDVNCVAWNPKEPGLLASCSDDGEVAFWKYQRPEGL. Positions 176–178 match the LYR motif; required for interaction with HSC20 motif; sequence LYR.

It belongs to the WD repeat CIA1 family. As to quaternary structure, component of the CIA complex. Interacts with CIAO2A and forms a complex with CIAO2B and MMS19; the interactions with CIAO2A and CIAO2B are mutually exclusive. Interacts with CHD1L, ERCC2, IREB2 and POLD1. Component of the MMXD complex, which includes CIAO1, ERCC2, CIAO2B, MMS19 and SLC25A5. Interacts with WT1. Interacts with CIAO3. Interacts (via LYR motif) with HSC20.

Its subcellular location is the cytoplasm. In terms of biological role, key component of the cytosolic iron-sulfur protein assembly (CIA) complex, a multiprotein complex that mediates the incorporation of iron-sulfur cluster into extramitochondrial Fe/S proteins. As a CIA complex component, interacts specifically with CIAO2A or CIAO2B and MMS19 to assist different branches of iron-sulfur protein assembly, depending of its interactors. The complex CIAO1:CIAO2B:MMS19 binds to and facilitates the assembly of most cytosolic-nuclear Fe/S proteins. CIAO1:CIAO2A specifically matures ACO1 and stabilizes IREB2. Seems to specifically modulate the transactivation activity of WT1. As part of the mitotic spindle-associated MMXD complex it may play a role in chromosome segregation. This is Probable cytosolic iron-sulfur protein assembly protein CIAO1 from Homo sapiens (Human).